Consider the following 602-residue polypeptide: Glutamyl-tRNA(Gln) amidotransferase subunit B, mitochondrial (602 aa).

It belongs to the GatB/GatE family. GatB subfamily. As to quaternary structure, subunit of the heterotrimeric GatCAB amidotransferase (AdT) complex, composed of A, B and C subunits.

The protein localises to the mitochondrion. It carries out the reaction L-glutamyl-tRNA(Gln) + L-glutamine + ATP + H2O = L-glutaminyl-tRNA(Gln) + L-glutamate + ADP + phosphate + H(+). Its function is as follows. Allows the formation of correctly charged Gln-tRNA(Gln) through the transamidation of misacylated Glu-tRNA(Gln) in the mitochondria. The reaction takes place in the presence of glutamine and ATP through an activated gamma-phospho-Glu-tRNA(Gln). This chain is Glutamyl-tRNA(Gln) amidotransferase subunit B, mitochondrial, found in Paracoccidioides lutzii (strain ATCC MYA-826 / Pb01) (Paracoccidioides brasiliensis).